The sequence spans 358 residues: Ion-translocating oxidoreductase complex subunit D (358 aa).

4 helical membrane-spanning segments follow: residues Ile-19–Gly-39, Gly-41–Ile-61, Leu-79–Ile-99, and Ile-125–Ile-145. Thr-186 carries the post-translational modification FMN phosphoryl threonine. A run of 5 helical transmembrane segments spans residues Phe-220–Leu-240, Ile-248–Phe-268, Leu-271–Thr-291, Ser-297–Ile-317, and Gly-321–Ile-341.

This sequence belongs to the NqrB/RnfD family. As to quaternary structure, the complex is composed of six subunits: RnfA, RnfB, RnfC, RnfD, RnfE and RnfG. FMN is required as a cofactor.

Its subcellular location is the cell inner membrane. In terms of biological role, part of a membrane-bound complex that couples electron transfer with translocation of ions across the membrane. The polypeptide is Ion-translocating oxidoreductase complex subunit D (Haemophilus influenzae (strain 86-028NP)).